The sequence spans 285 residues: SLAM family member 8 (285 aa).

The first 22 residues, 1 to 22 (MVMRPLWSLLLWEALLPITVTG), serve as a signal peptide directing secretion. The Extracellular portion of the chain corresponds to 23–233 (AQVLSKVGGS…AAPGKASYKD (211 aa)). A glycan (N-linked (GlcNAc...) asparagine) is linked at Asn-85. The Ig-like C2-type domain occupies 128 to 215 (PVVQVFIAVE…PVSWDLATVT (88 aa)). Cys-152 and Cys-201 form a disulfide bridge. The chain crosses the membrane as a helical span at residues 234–254 (VLLVVVPVSLLLMLVTLFSAW). The Cytoplasmic portion of the chain corresponds to 255 to 285 (HWCPCSGKKKKDVHADRVGPETENPLVQDLP). The interval 262–285 (KKKKDVHADRVGPETENPLVQDLP) is disordered.

In terms of tissue distribution, expressed in lymph node, spleen, thymus and bone marrow.

Its subcellular location is the membrane. Functionally, may play a role in B-lineage commitment and/or modulation of signaling through the B-cell receptor. In Homo sapiens (Human), this protein is SLAM family member 8 (SLAMF8).